The primary structure comprises 255 residues: Methylthioribulose-1-phosphate dehydratase (255 aa).

Substrate is bound at residue Cys111. His128 and His130 together coordinate Zn(2+). Glu157 (proton donor/acceptor) is an active-site residue. Residue His213 coordinates Zn(2+).

This sequence belongs to the aldolase class II family. MtnB subfamily. The cofactor is Zn(2+).

The protein localises to the cytoplasm. The catalysed reaction is 5-(methylsulfanyl)-D-ribulose 1-phosphate = 5-methylsulfanyl-2,3-dioxopentyl phosphate + H2O. It participates in amino-acid biosynthesis; L-methionine biosynthesis via salvage pathway; L-methionine from S-methyl-5-thio-alpha-D-ribose 1-phosphate: step 2/6. Functionally, catalyzes the dehydration of methylthioribulose-1-phosphate (MTRu-1-P) into 2,3-diketo-5-methylthiopentyl-1-phosphate (DK-MTP-1-P). The polypeptide is Methylthioribulose-1-phosphate dehydratase (Talaromyces stipitatus (strain ATCC 10500 / CBS 375.48 / QM 6759 / NRRL 1006) (Penicillium stipitatum)).